The chain runs to 410 residues: MPDDLINSFMTGPDENGRFGDFGGRFVSETLMPLILELERQYEFAKTDQAFWDEMHHLWTHYVGRPSPLYFAERLTERLGGAKVYLKRDELNHTGAHKINNVLGQIILARRMGKTRIIAETGAGQHGVATATVCAKFGLKCVVYMGAHDVERQAPNVFRMKLLGAEVVPVTSGRGTLKDAMNDALRDWVTNVRETFYCIGTVAGPHPYPAMVRDFQAIIGQEAREQMMEAEGRLPDTLIAAIGGGSNAMGLFYPFLDDKEVAIIGVEAGGKGVNEKMEHCASLTGGRPGVLHGNRTYLLQDDDGQILEGFSISAGLDYPGIGPEHAWLHDIGRAKYVSITDAEALDAFQLCCETEGIIPALEPSHALAHVAKIAPDLPRDHIICMNMCGRGDKDIFTVAKALGQDMSGAV.

At Lys-98 the chain carries N6-(pyridoxal phosphate)lysine.

This sequence belongs to the TrpB family. In terms of assembly, tetramer of two alpha and two beta chains. It depends on pyridoxal 5'-phosphate as a cofactor.

It carries out the reaction (1S,2R)-1-C-(indol-3-yl)glycerol 3-phosphate + L-serine = D-glyceraldehyde 3-phosphate + L-tryptophan + H2O. It functions in the pathway amino-acid biosynthesis; L-tryptophan biosynthesis; L-tryptophan from chorismate: step 5/5. Its function is as follows. The beta subunit is responsible for the synthesis of L-tryptophan from indole and L-serine. This Dinoroseobacter shibae (strain DSM 16493 / NCIMB 14021 / DFL 12) protein is Tryptophan synthase beta chain.